Reading from the N-terminus, the 295-residue chain is MSARIIDGKVISAELRARVAAEVTRIKTDHGITPGLAVVLVGADPASEVYVRSKHKQTQEAGMASFEHRLPADVPQAELLALIAKLNADPTVHGILVQLPLPKGLDSNAVIDAIDPAKDVDGLNPVNAGRLASGLFALTPCTPLGCIIMAKQVHASLEGMNAIVVGRSNLVGKPLVQLLLNENATVTIAHSRSRDLPALCRQADLVFAAVGKPEMIRGDWIKPGATVIDVGINRTPSPDGGKDKLVGDVAFAEAKEVAGAITPVPGGVGLMTVACLLVNTVRAASAIHGLPKPAV.

Residues 166 to 168 (GRS), Ser191, and Ile232 each bind NADP(+).

This sequence belongs to the tetrahydrofolate dehydrogenase/cyclohydrolase family. As to quaternary structure, homodimer.

The catalysed reaction is (6R)-5,10-methylene-5,6,7,8-tetrahydrofolate + NADP(+) = (6R)-5,10-methenyltetrahydrofolate + NADPH. It carries out the reaction (6R)-5,10-methenyltetrahydrofolate + H2O = (6R)-10-formyltetrahydrofolate + H(+). It participates in one-carbon metabolism; tetrahydrofolate interconversion. Its function is as follows. Catalyzes the oxidation of 5,10-methylenetetrahydrofolate to 5,10-methenyltetrahydrofolate and then the hydrolysis of 5,10-methenyltetrahydrofolate to 10-formyltetrahydrofolate. This Rhodopseudomonas palustris (strain BisA53) protein is Bifunctional protein FolD.